A 621-amino-acid polypeptide reads, in one-letter code: Chaperone protein HtpG (621 aa).

Positions Met1–Arg341 are a; substrate-binding. The segment at Glu342 to Asn547 is b. A c region spans residues Phe548–Leu621.

The protein belongs to the heat shock protein 90 family. As to quaternary structure, homodimer.

It is found in the cytoplasm. Molecular chaperone. Has ATPase activity. In Helicobacter pylori (strain HPAG1), this protein is Chaperone protein HtpG.